Consider the following 700-residue polypeptide: Protein no-on-transient A (700 aa).

The tract at residues 1-270 (MESAGKQDNN…GGGGPRGGED (270 aa)) is disordered. 2 stretches are compositionally biased toward low complexity: residues 9–29 (NNAT…ANKN) and 54–69 (GGPN…NQNG). Residues 70–79 (GVTGGGGAVG) show a composition bias toward gly residues. Low complexity-rich tracts occupy residues 80–89 (GPNQNKNFGN), 96–124 (GNRN…KPNN), and 144–175 (AAAG…VHGQ). Over residues 176–208 (GNQGGPGNQGGAGNQGGQGNQGGAGNQGNGQGF) the composition is skewed to gly residues. Position 236 is a phosphoserine (Ser-236). Gly residues predominate over residues 253–266 (MGGGGGGGGGGGPR). 2 consecutive RRM domains span residues 302 to 374 (NRLY…FAPN) and 376 to 457 (TILR…PMEV). The stretch at 505–616 (NLFKTKQDAL…AQQLNSLLDQ (112 aa)) forms a coiled coil. A compositionally biased stretch (basic and acidic residues) spans 568–582 (EMRKREEETMRRHQT). 2 disordered regions span residues 568-591 (EMRK…MNRQ) and 677-700 (MNQG…RRRF). Gly residues predominate over residues 682–691 (NQRGNNGGGN).

Required for normal vision and courtship behavior in Drosophila. The sequence is that of Protein no-on-transient A (nonA) from Drosophila melanogaster (Fruit fly).